The chain runs to 998 residues: MNKKDQLQRLIDKYKSDIDYYRSARYNETQLRTDFLDQLFLILGWDITNAAGKPTNEREVLVEEGLKARAGENTKKPDYTFRLFSERKFFLEAKKPSVDISTTIEPALQVRRYGFTAKLKISVLSNFEYTAIYDCSNQVKETDSVANSRIKLYHFTELVDKFDEINNLIGRESVYTGHFDNEWSEIENKILRFSVDDLFLKQINDWRLLLANEFLQIKNELPEEKLNDLVQNYINSIVFLRVCEDRDLEEYETLYHFAQDKDFQSLVKKLKSSDKKYNSGLFSLEYIDELLSNANSCIWSIIEQLYFPQSTYSFSVFSSDILGNIYEIFLSEKVRIDELGNVKIQPKEEHIDRDVVTTPTHIVKEIIRNTVVEYCKGKSDIEILNSKFADIACGSGAFIIEAFQFIQDILIDYYIQNDKSKLQQISEHTYKLKFEVKREILCKCIYGIDKDYNATKACTFGLLLKLLEGETTETIGKDTPILPALDTNILFGNSLIDSGDKVKQEDIFSINPFDLTNYQFDVIVGNPPYMATEHMNQLTPKELDIYKRKYKSAYKQFDKYFLFIERSIQILKEYGYLGYILPSRFIKVDAGKKLRKFLSENKYLSKLISFGSHQVFKNKTTYTCLLFLNKENHDNFSFYEVKDFKKWLTREDKYLLSSTYQTSSLDSDTWVLEKKINDILKLMFSKSEQLGNIVGKSNVANGIQTSANKYYIHKEIKSENGFIYFEYDGIEYHIEKELTRPYFETNRSGDDSFYTYKDVEPNSFVVYPYKKVGERIQFIEYDELKRQYPKLFEFLQVVKVHLNDKKRSIKPDPTGPNEWYRYGRSQALENCDVDQKLIVGILSNGYKYSIDNHRTFVSSGGTAGYSIINIPNNVRYSIYYIQAILTSKYLEWFASIYGDIFRGRFVARGTKVQTRMPIPTIDFDDPKQKEIHDTISSKQQYLNKLYSQTQKSADRDKIIFERQFEQEKIQMDYLIKNLFDLGDLDSEIPTVEDLYKNL.

It in the C-terminal section; belongs to the N(4)/N(6)-methyltransferase family. In terms of assembly, monomer.

The enzyme catalyses Endonucleolytic cleavage of DNA to give specific double-stranded fragments with terminal 5'-phosphates.. It catalyses the reaction a 2'-deoxyadenosine in DNA + S-adenosyl-L-methionine = an N(6)-methyl-2'-deoxyadenosine in DNA + S-adenosyl-L-homocysteine + H(+). Mg(2+) is absolutely required for DNA restriction. Its function is as follows. An E, G and S subtype restriction enzyme that recognizes the (non-palindromic) double-stranded sequence 5'-CTGAAG-3' and cleaves respectively 22 bases after C-1 and 14 bases before C'-1; cleavage of lambda DNA is never complete. Also acts as a methylase that causes specific methylation on A-5 in 5'-CTGAAG-3', the other strand is methylated by the M.Eco57I methylase. The chain is Type II restriction enzyme and methyltransferase RM.Eco57I from Escherichia coli.